Here is a 241-residue protein sequence, read N- to C-terminus: 6-phosphogluconolactonase (241 aa).

This sequence belongs to the glucosamine/galactosamine-6-phosphate isomerase family. 6-phosphogluconolactonase subfamily.

The enzyme catalyses 6-phospho-D-glucono-1,5-lactone + H2O = 6-phospho-D-gluconate + H(+). The protein operates within carbohydrate degradation; pentose phosphate pathway; D-ribulose 5-phosphate from D-glucose 6-phosphate (oxidative stage): step 2/3. Functionally, hydrolysis of 6-phosphogluconolactone to 6-phosphogluconate. This is 6-phosphogluconolactonase (pgl) from Treponema pallidum (strain Nichols).